A 172-amino-acid chain; its full sequence is Cytochrome b6-f complex iron-sulfur subunit (172 aa).

Residues 17–39 (VFLNALLSSSVGVVVVGTLYPVV) form a helical membrane-spanning segment. Residues 61 to 161 (GKPISVSELL…ATVDGDNVRF (101 aa)) form the Rieske domain. Residues cysteine 107, histidine 109, cysteine 125, and histidine 128 each coordinate [2Fe-2S] cluster. Cysteine 112 and cysteine 127 form a disulfide bridge.

The protein belongs to the Rieske iron-sulfur protein family. As to quaternary structure, the 4 large subunits of the cytochrome b6-f complex are cytochrome b6, subunit IV (17 kDa polypeptide, PetD), cytochrome f and the Rieske protein, while the 4 small subunits are PetG, PetL, PetM and PetN. The complex functions as a dimer. [2Fe-2S] cluster is required as a cofactor.

It is found in the cellular thylakoid membrane. It catalyses the reaction 2 oxidized [plastocyanin] + a plastoquinol + 2 H(+)(in) = 2 reduced [plastocyanin] + a plastoquinone + 4 H(+)(out). Functionally, component of the cytochrome b6-f complex, which mediates electron transfer between photosystem II (PSII) and photosystem I (PSI), cyclic electron flow around PSI, and state transitions. The sequence is that of Cytochrome b6-f complex iron-sulfur subunit from Synechococcus sp. (strain JA-3-3Ab) (Cyanobacteria bacterium Yellowstone A-Prime).